A 159-amino-acid chain; its full sequence is 17 kDa surface antigen (159 aa).

A signal peptide spans 1–19 (MKLLSKIMIIALAASMLQA). Residue cysteine 20 is the site of N-palmitoyl cysteine attachment. Cysteine 20 carries the S-diacylglycerol cysteine lipid modification.

This sequence belongs to the rickettsiale 17 kDa surface antigen family.

It is found in the cell outer membrane. In Rickettsia felis (strain ATCC VR-1525 / URRWXCal2) (Rickettsia azadi), this protein is 17 kDa surface antigen (omp).